Reading from the N-terminus, the 572-residue chain is EF-hand calcium-binding domain-containing protein 12 (572 aa).

Disordered stretches follow at residues 62–85 (VPRKEDQTPLNPASQPQAPPKPIP) and 146–169 (EQSAQPNASQATTRTTRKKAPRLS). Residues 196 to 231 (SRKIKILEIFHKVGQGENQRITREEFIAAVKAVGVP) form the EF-hand domain. Ca(2+) is bound at residue Glu212.

The protein is EF-hand calcium-binding domain-containing protein 12 (EFCAB12) of Homo sapiens (Human).